An 84-amino-acid chain; its full sequence is Small ribosomal subunit protein uS15 (84 aa).

Belongs to the universal ribosomal protein uS15 family. As to quaternary structure, part of the 30S ribosomal subunit. Forms a bridge to the 50S subunit in the 70S ribosome, contacting the 23S rRNA.

Its function is as follows. One of the primary rRNA binding proteins, it binds directly to 16S rRNA where it helps nucleate assembly of the platform of the 30S subunit by binding and bridging several RNA helices of the 16S rRNA. Forms an intersubunit bridge (bridge B4) with the 23S rRNA of the 50S subunit in the ribosome. This chain is Small ribosomal subunit protein uS15, found in Thermosipho melanesiensis (strain DSM 12029 / CIP 104789 / BI429).